A 1010-amino-acid polypeptide reads, in one-letter code: Glycine--tRNA ligase (1010 aa).

The tract at residues 1 to 312 is glycine--tRNA ligase alpha subunit; the sequence is MSEHPLTLQS…TSESVVPMIS (312 aa). Residues 313 to 1010 are glycine--tRNA ligase beta subunit; that stretch reads STEDLLLEIG…SLCHWESVAV (698 aa).

It belongs to the class-II aminoacyl-tRNA synthetase family.

The protein resides in the cytoplasm. The catalysed reaction is tRNA(Gly) + glycine + ATP = glycyl-tRNA(Gly) + AMP + diphosphate. The sequence is that of Glycine--tRNA ligase (glyQS) from Chlamydia pneumoniae (Chlamydophila pneumoniae).